Reading from the N-terminus, the 354-residue chain is Uroporphyrinogen decarboxylase (354 aa).

Substrate is bound by residues 27–31 (RQAGR), aspartate 77, tyrosine 154, threonine 209, and histidine 327.

The protein belongs to the uroporphyrinogen decarboxylase family. As to quaternary structure, homodimer.

Its subcellular location is the cytoplasm. The enzyme catalyses uroporphyrinogen III + 4 H(+) = coproporphyrinogen III + 4 CO2. Its pathway is porphyrin-containing compound metabolism; protoporphyrin-IX biosynthesis; coproporphyrinogen-III from 5-aminolevulinate: step 4/4. Its function is as follows. Catalyzes the decarboxylation of four acetate groups of uroporphyrinogen-III to yield coproporphyrinogen-III. The sequence is that of Uroporphyrinogen decarboxylase from Pseudomonas putida (strain ATCC 700007 / DSM 6899 / JCM 31910 / BCRC 17059 / LMG 24140 / F1).